The following is a 147-amino-acid chain: Probable WRKY transcription factor 45 (147 aa).

A disordered region spans residues 21–52; it reads TEFHGVDNSAQPTTSSEEKPRSKKKKKEREAR. The WRKY DNA-binding region spans 59–124; that stretch reads SQVDILDDGY…YQGVHTHAVD (66 aa). The Zn(2+) site is built by Cys90, Cys95, His119, and His121.

The protein belongs to the WRKY group I family.

Its subcellular location is the nucleus. In terms of biological role, transcription factor. Interacts specifically with the W box (5'-(T)TGAC[CT]-3'), a frequently occurring elicitor-responsive cis-acting element. The sequence is that of Probable WRKY transcription factor 45 (WRKY45) from Arabidopsis thaliana (Mouse-ear cress).